Here is a 278-residue protein sequence, read N- to C-terminus: Ribosomal RNA small subunit methyltransferase A (278 aa).

Residues Asn27, Leu29, Gly54, Glu75, Asp101, and Asn122 each coordinate S-adenosyl-L-methionine.

This sequence belongs to the class I-like SAM-binding methyltransferase superfamily. rRNA adenine N(6)-methyltransferase family. RsmA subfamily.

It is found in the cytoplasm. It catalyses the reaction adenosine(1518)/adenosine(1519) in 16S rRNA + 4 S-adenosyl-L-methionine = N(6)-dimethyladenosine(1518)/N(6)-dimethyladenosine(1519) in 16S rRNA + 4 S-adenosyl-L-homocysteine + 4 H(+). Specifically dimethylates two adjacent adenosines (A1518 and A1519) in the loop of a conserved hairpin near the 3'-end of 16S rRNA in the 30S particle. May play a critical role in biogenesis of 30S subunits. The protein is Ribosomal RNA small subunit methyltransferase A of Brucella anthropi (strain ATCC 49188 / DSM 6882 / CCUG 24695 / JCM 21032 / LMG 3331 / NBRC 15819 / NCTC 12168 / Alc 37) (Ochrobactrum anthropi).